The following is a 586-amino-acid chain: UvrABC system protein C (586 aa).

The GIY-YIG domain occupies 17–94; sequence HKPGCYLWKD…IKQYKPRFNL (78 aa). A UVR domain is found at 201-236; sequence EQVLNHLQQQEIKASEQQNFEAARHFLDLQKAVLEL.

The protein belongs to the UvrC family. Interacts with UvrB in an incision complex.

It is found in the cytoplasm. The UvrABC repair system catalyzes the recognition and processing of DNA lesions. UvrC both incises the 5' and 3' sides of the lesion. The N-terminal half is responsible for the 3' incision and the C-terminal half is responsible for the 5' incision. This Mycoplasma pneumoniae (strain ATCC 29342 / M129 / Subtype 1) (Mycoplasmoides pneumoniae) protein is UvrABC system protein C.